The following is a 156-amino-acid chain: Cytochrome c-type biogenesis protein CcmE (156 aa).

Residues 1–7 lie on the Cytoplasmic side of the membrane; sequence MTRRQRR. Residues 8 to 28 traverse the membrane as a helical; Signal-anchor for type II membrane protein segment; that stretch reads LGILLAALVCAGAATALTLNA. At 29–156 the chain is on the periplasmic side; sequence FRSNLVFFFS…AKESARSASR (128 aa). Residues His123 and Tyr127 each coordinate heme.

The protein belongs to the CcmE/CycJ family.

It is found in the cell inner membrane. Its function is as follows. Heme chaperone required for the biogenesis of c-type cytochromes. Transiently binds heme delivered by CcmC and transfers the heme to apo-cytochromes in a process facilitated by CcmF and CcmH. The chain is Cytochrome c-type biogenesis protein CcmE from Ralstonia pickettii (strain 12J).